We begin with the raw amino-acid sequence, 237 residues long: D-aminoacyl-tRNA deacylase (237 aa).

This sequence belongs to the DtdA deacylase family. In terms of assembly, monomer. The cofactor is Zn(2+).

The catalysed reaction is a D-aminoacyl-tRNA + H2O = a tRNA + a D-alpha-amino acid + H(+). It carries out the reaction glycyl-tRNA(Ala) + H2O = tRNA(Ala) + glycine + H(+). Its function is as follows. D-aminoacyl-tRNA deacylase with broad substrate specificity. By recycling D-aminoacyl-tRNA to D-amino acids and free tRNA molecules, this enzyme counteracts the toxicity associated with the formation of D-aminoacyl-tRNA entities in vivo. The polypeptide is D-aminoacyl-tRNA deacylase (Sulfurisphaera tokodaii (strain DSM 16993 / JCM 10545 / NBRC 100140 / 7) (Sulfolobus tokodaii)).